Here is a 105-residue protein sequence, read N- to C-terminus: Large ribosomal subunit protein bL21 (105 aa).

The protein belongs to the bacterial ribosomal protein bL21 family. Part of the 50S ribosomal subunit. Contacts protein L20.

In terms of biological role, this protein binds to 23S rRNA in the presence of protein L20. This is Large ribosomal subunit protein bL21 from Rhizobium johnstonii (strain DSM 114642 / LMG 32736 / 3841) (Rhizobium leguminosarum bv. viciae).